Here is a 476-residue protein sequence, read N- to C-terminus: ATP synthase subunit beta (476 aa).

157 to 164 (GGAGVGKT) serves as a coordination point for ATP.

It belongs to the ATPase alpha/beta chains family. In terms of assembly, F-type ATPases have 2 components, CF(1) - the catalytic core - and CF(0) - the membrane proton channel. CF(1) has five subunits: alpha(3), beta(3), gamma(1), delta(1), epsilon(1). CF(0) has three main subunits: a(1), b(2) and c(9-12). The alpha and beta chains form an alternating ring which encloses part of the gamma chain. CF(1) is attached to CF(0) by a central stalk formed by the gamma and epsilon chains, while a peripheral stalk is formed by the delta and b chains.

It is found in the cell membrane. It carries out the reaction ATP + H2O + 4 H(+)(in) = ADP + phosphate + 5 H(+)(out). In terms of biological role, produces ATP from ADP in the presence of a proton gradient across the membrane. The catalytic sites are hosted primarily by the beta subunits. The chain is ATP synthase subunit beta from Mycoplasma genitalium (strain ATCC 33530 / DSM 19775 / NCTC 10195 / G37) (Mycoplasmoides genitalium).